The primary structure comprises 445 residues: Response regulator protein PilR (445 aa).

In terms of domain architecture, Response regulatory spans K5–L119. 4-aspartylphosphate is present on residues D11 and D54. Positions L135–T364 constitute a Sigma-54 factor interaction domain. ATP contacts are provided by residues G163–E170 and A226–E235. The segment at residues R418 to Y437 is a DNA-binding region (H-T-H motif).

In terms of processing, phosphorylated by PilS.

Its subcellular location is the cytoplasm. Functionally, member of the two-component regulatory system PilS/PilR that regulates the expression of multiple genes including the type IV pilus (T4P) major subunit PilA. Thereby, plays a major role in the regulation of multiple motility pathways. Upon appropriate environmental signals, the histidine kinase PilS transfers the phosphoryl group onto PilR. In turn, PilR functions as a transcriptional activator by direct binding to a cis-acting sequence upstream of the pilin gene promoter leading to its activation. The polypeptide is Response regulator protein PilR (pilR) (Pseudomonas aeruginosa (strain ATCC 15692 / DSM 22644 / CIP 104116 / JCM 14847 / LMG 12228 / 1C / PRS 101 / PAO1)).